The following is a 365-amino-acid chain: Ribosomal RNA large subunit methyltransferase M (365 aa).

S-adenosyl-L-methionine contacts are provided by residues Ser-188, 221–224 (CPGG), Asp-240, Asp-260, and Asp-277. Catalysis depends on Lys-306, which acts as the Proton acceptor.

The protein belongs to the class I-like SAM-binding methyltransferase superfamily. RNA methyltransferase RlmE family. RlmM subfamily. In terms of assembly, monomer.

Its subcellular location is the cytoplasm. The enzyme catalyses cytidine(2498) in 23S rRNA + S-adenosyl-L-methionine = 2'-O-methylcytidine(2498) in 23S rRNA + S-adenosyl-L-homocysteine + H(+). In terms of biological role, catalyzes the 2'-O-methylation at nucleotide C2498 in 23S rRNA. The protein is Ribosomal RNA large subunit methyltransferase M of Proteus mirabilis (strain HI4320).